A 244-amino-acid polypeptide reads, in one-letter code: 1-(5-phosphoribosyl)-5-[(5-phosphoribosylamino)methylideneamino] imidazole-4-carboxamide isomerase (244 aa).

The active-site Proton acceptor is the Asp-8. Asp-130 (proton donor) is an active-site residue.

It belongs to the HisA/HisF family.

Its subcellular location is the cytoplasm. The catalysed reaction is 1-(5-phospho-beta-D-ribosyl)-5-[(5-phospho-beta-D-ribosylamino)methylideneamino]imidazole-4-carboxamide = 5-[(5-phospho-1-deoxy-D-ribulos-1-ylimino)methylamino]-1-(5-phospho-beta-D-ribosyl)imidazole-4-carboxamide. It functions in the pathway amino-acid biosynthesis; L-histidine biosynthesis; L-histidine from 5-phospho-alpha-D-ribose 1-diphosphate: step 4/9. The polypeptide is 1-(5-phosphoribosyl)-5-[(5-phosphoribosylamino)methylideneamino] imidazole-4-carboxamide isomerase (Syntrophomonas wolfei subsp. wolfei (strain DSM 2245B / Goettingen)).